The primary structure comprises 299 residues: Tetrahydromethanopterin S-methyltransferase subunit E (299 aa).

Transmembrane regions (helical) follow at residues Ala-57 to Leu-79, Gly-95 to Gly-115, Ile-133 to Leu-153, Leu-158 to Ile-178, Gly-237 to Ile-257, and Val-262 to Ile-282.

The protein belongs to the MtrE family. The complex is composed of 8 subunits; MtrA, MtrB, MtrC, MtrD, MtrE, MtrF, MtrG and MtrH.

The protein localises to the cell membrane. It carries out the reaction 5-methyl-5,6,7,8-tetrahydromethanopterin + coenzyme M + 2 Na(+)(in) = 5,6,7,8-tetrahydromethanopterin + methyl-coenzyme M + 2 Na(+)(out). It functions in the pathway one-carbon metabolism; methanogenesis from CO(2); methyl-coenzyme M from 5,10-methylene-5,6,7,8-tetrahydromethanopterin: step 2/2. Part of a complex that catalyzes the formation of methyl-coenzyme M and tetrahydromethanopterin from coenzyme M and methyl-tetrahydromethanopterin. This is an energy-conserving, sodium-ion translocating step. In Methanococcus maripaludis (strain C5 / ATCC BAA-1333), this protein is Tetrahydromethanopterin S-methyltransferase subunit E.